The chain runs to 214 residues: MARIVVLISGSGSNLQALIDAQKQGQLGEDAHIVSVISSSKKAYGLTRAADNNIPTKVCSLYPYTKGIAKEDKAARAKARSQFENDLAKLVLEEKPDVIICAGWLLILGSTFLSQLQSVPILNLHPALPGCFDGTTHAIEMAWRKCQDENKPLTAGCMVHYVIEEVDKGEPLVVKKLEIIPGEETLEQYEQRVHDAEHIAIVEATYKVLQQLHK.

12 to 14 contacts N(1)-(5-phospho-beta-D-ribosyl)glycinamide; sequence GSN. (6R)-10-formyltetrahydrofolate is bound by residues 105–108 and Asn123; that span reads LLIL. Catalysis depends on His125, which acts as the Proton donor. Asp167 contacts (6R)-10-formyltetrahydrofolate. N(1)-(5-phospho-beta-D-ribosyl)glycinamide is bound at residue Glu197.

This sequence belongs to the GART family.

It carries out the reaction N(1)-(5-phospho-beta-D-ribosyl)glycinamide + (6R)-10-formyltetrahydrofolate = N(2)-formyl-N(1)-(5-phospho-beta-D-ribosyl)glycinamide + (6S)-5,6,7,8-tetrahydrofolate + H(+). It participates in purine metabolism; IMP biosynthesis via de novo pathway; N(2)-formyl-N(1)-(5-phospho-D-ribosyl)glycinamide from N(1)-(5-phospho-D-ribosyl)glycinamide (10-formyl THF route): step 1/1. This chain is Phosphoribosylglycinamide formyltransferase, found in Saccharomyces cerevisiae (strain ATCC 204508 / S288c) (Baker's yeast).